The following is a 308-amino-acid chain: N-acetylmuramic acid 6-phosphate etherase (308 aa).

Residues 62–225 (ITDAFKVGGR…TTASMIRLGK (164 aa)) form the SIS domain. Catalysis depends on Glu-90, which acts as the Proton donor. The active site involves Glu-121.

This sequence belongs to the GCKR-like family. MurNAc-6-P etherase subfamily. In terms of assembly, homodimer.

It catalyses the reaction N-acetyl-D-muramate 6-phosphate + H2O = N-acetyl-D-glucosamine 6-phosphate + (R)-lactate. Its pathway is amino-sugar metabolism; 1,6-anhydro-N-acetylmuramate degradation. The protein operates within amino-sugar metabolism; N-acetylmuramate degradation. It functions in the pathway cell wall biogenesis; peptidoglycan recycling. In terms of biological role, specifically catalyzes the cleavage of the D-lactyl ether substituent of MurNAc 6-phosphate, producing GlcNAc 6-phosphate and D-lactate. Together with AnmK, is also required for the utilization of anhydro-N-acetylmuramic acid (anhMurNAc) either imported from the medium or derived from its own cell wall murein, and thus plays a role in cell wall recycling. In Vibrio campbellii (strain ATCC BAA-1116), this protein is N-acetylmuramic acid 6-phosphate etherase.